Consider the following 523-residue polypeptide: Probable aminopeptidase NPEPL1 (523 aa).

Positions 260 and 265 each coordinate Zn(2+). The active site involves K272. The Zn(2+) site is built by D283, D342, and E344. R346 is a catalytic residue.

Belongs to the peptidase M17 family. Zn(2+) serves as cofactor. The cofactor is Mn(2+). Ubiquitously expressed.

Functionally, probably catalyzes the removal of unsubstituted N-terminal amino acids from various peptides. The chain is Probable aminopeptidase NPEPL1 (NPEPL1) from Homo sapiens (Human).